Consider the following 89-residue polypeptide: MGEVAATMKIMPEGVDTDLDDLKIRLEAVLPEGASIFGSEIEPVAFGLKALKLVVLVGDLEGGTEPVEEAFAAVPGVESVQVTELGRPV.

It belongs to the EF-1-beta/EF-1-delta family.

Promotes the exchange of GDP for GTP in EF-1-alpha/GDP, thus allowing the regeneration of EF-1-alpha/GTP that could then be used to form the ternary complex EF-1-alpha/GTP/AAtRNA. This is Elongation factor 1-beta from Methanococcoides burtonii (strain DSM 6242 / NBRC 107633 / OCM 468 / ACE-M).